The primary structure comprises 525 residues: Ankyrin repeat domain-containing protein SOWAHC (525 aa).

Residues 84 to 263 (CEGPSEPSGD…EESSGGGSVT (180 aa)) form a disordered region. S88 is modified (phosphoserine). Over residues 101–112 (AEPEAPDGPAGP) the composition is skewed to low complexity. Phosphoserine is present on residues S126, S213, and S226. Residues 230–241 (SSGGGRGRGGGD) show a composition bias toward gly residues. The span at 242 to 251 (SDSASVASSS) shows a compositional bias: low complexity. ANK repeat units lie at residues 301–330 (TGFT…KHQL) and 340–370 (GGYT…DVDI). A disordered region spans residues 434-525 (DGGDHHHHHH…TLRPKSNVFG (92 aa)). The segment covering 468–477 (IKPRLNKIRF) has biased composition (basic residues). Residues 489–509 (RDPEQPLEGRGEEGVGEERPV) are compositionally biased toward basic and acidic residues.

It belongs to the SOWAH family.

In Homo sapiens (Human), this protein is Ankyrin repeat domain-containing protein SOWAHC (SOWAHC).